Consider the following 661-residue polypeptide: DNA-directed RNA polymerase subunit beta' (661 aa).

Residues Cys69, Cys71, Cys87, and Cys90 each coordinate Zn(2+). Residues Asp489, Asp491, and Asp493 each coordinate Mg(2+).

It belongs to the RNA polymerase beta' chain family. RpoC1 subfamily. In terms of assembly, in plastids the minimal PEP RNA polymerase catalytic core is composed of four subunits: alpha, beta, beta', and beta''. When a (nuclear-encoded) sigma factor is associated with the core the holoenzyme is formed, which can initiate transcription. Mg(2+) serves as cofactor. Zn(2+) is required as a cofactor.

The protein resides in the plastid. It is found in the chloroplast. The enzyme catalyses RNA(n) + a ribonucleoside 5'-triphosphate = RNA(n+1) + diphosphate. In terms of biological role, DNA-dependent RNA polymerase catalyzes the transcription of DNA into RNA using the four ribonucleoside triphosphates as substrates. This is DNA-directed RNA polymerase subunit beta' from Chaetosphaeridium globosum (Charophycean green alga).